Consider the following 522-residue polypeptide: Peptide chain release factor 3 (522 aa).

The tr-type G domain occupies 9 to 276 (KKRRTFAIIS…SFVNLAPAPQ (268 aa)). Residues 18 to 25 (SHPDAGKT), 86 to 90 (DTPGH), and 140 to 143 (NKLD) contribute to the GTP site.

It belongs to the TRAFAC class translation factor GTPase superfamily. Classic translation factor GTPase family. PrfC subfamily.

Its subcellular location is the cytoplasm. Increases the formation of ribosomal termination complexes and stimulates activities of RF-1 and RF-2. It binds guanine nucleotides and has strong preference for UGA stop codons. It may interact directly with the ribosome. The stimulation of RF-1 and RF-2 is significantly reduced by GTP and GDP, but not by GMP. The chain is Peptide chain release factor 3 from Lactobacillus gasseri (strain ATCC 33323 / DSM 20243 / BCRC 14619 / CIP 102991 / JCM 1131 / KCTC 3163 / NCIMB 11718 / NCTC 13722 / AM63).